Reading from the N-terminus, the 376-residue chain is MTRQQTKKNYSLRKLKTGTASVAVALTVLGAGFANQTTVKAEGAKIDWQEEYKKLDEDNAKLVEVVETTSLENEKLKSENEENKKNLDKLSKENQGKLEKLELDYLKKLDHEHKEHQKEQQEQEERQKNQEQLERKYQREVEKRYQEQLQKQQQLETEKQISEASRKSLSRDLEASRAAKKDLEAEHQKLEAEHQKLKEDKQISDASRQGLSRDLEASRAAKKELEANHQKLEAEHQKLKEDKQISDASRQGLSRDLEASRAAKKELEANHQKLEAEAKALKEQLAKQAEELAKLRAGKASDSQTPDTKPGNKAVPGKGQAPQAGTKPNQNKAPMKETKRQLPSTGETANPFFTAAALTVMATAGVAAVVKRKEEN.

The signal sequence occupies residues 1–41; it reads MTRQQTKKNYSLRKLKTGTASVAVALTVLGAGFANQTTVKA. The segment at 69–271 is disordered; that stretch reads TSLENEKLKS…AAKKELEANH (203 aa). 4 stretches are compositionally biased toward basic and acidic residues: residues 72–146, 156–203, 211–245, and 253–271; these read ENEK…KRYQ, ETEK…DKQI, LSRD…DKQI, and LSRD…EANH. 3 C repeats span residues 153 to 187, 195 to 229, and 237 to 271; these read QQLE…EAEH and QKLK…EANH. 4 D repeats span residues 272-277, 278-283, 286-291, and 293-298; these read QKLEAE, AKALKE, AKQAEE, and AKLRAG. The segment at 292–348 is disordered; it reads LAKLRAGKASDSQTPDTKPGNKAVPGKGQAPQAGTKPNQNKAPMKETKRQLPSTGET. Residues 342-346 carry the LPXTG sorting signal motif; sequence LPSTG. Residue Thr-345 is modified to Pentaglycyl murein peptidoglycan amidated threonine. The propeptide at 346 to 376 is removed by sortase; that stretch reads GETANPFFTAAALTVMATAGVAAVVKRKEEN.

Belongs to the M protein family.

It is found in the secreted. The protein resides in the cell wall. The protein is Immunoglobulin G-binding protein H of Streptococcus pyogenes serotype M1.